The primary structure comprises 293 residues: 4-hydroxy-tetrahydrodipicolinate synthase (293 aa).

Thr-47 is a pyruvate binding site. The active-site Proton donor/acceptor is Tyr-135. Catalysis depends on Lys-164, which acts as the Schiff-base intermediate with substrate. Ile-205 provides a ligand contact to pyruvate.

The protein belongs to the DapA family. Homotetramer; dimer of dimers.

The protein localises to the cytoplasm. It carries out the reaction L-aspartate 4-semialdehyde + pyruvate = (2S,4S)-4-hydroxy-2,3,4,5-tetrahydrodipicolinate + H2O + H(+). It functions in the pathway amino-acid biosynthesis; L-lysine biosynthesis via DAP pathway; (S)-tetrahydrodipicolinate from L-aspartate: step 3/4. Catalyzes the condensation of (S)-aspartate-beta-semialdehyde [(S)-ASA] and pyruvate to 4-hydroxy-tetrahydrodipicolinate (HTPA). The polypeptide is 4-hydroxy-tetrahydrodipicolinate synthase (Symbiobacterium thermophilum (strain DSM 24528 / JCM 14929 / IAM 14863 / T)).